We begin with the raw amino-acid sequence, 67 residues long: MAVPKRKMSRSNTRARRSQWKATAPHLVKTVENGQVTYSLPHQAKVVTDSAGTALFLEYKGRKVADV.

Residues 1–19 (MAVPKRKMSRSNTRARRSQ) show a composition bias toward basic residues. The disordered stretch occupies residues 1–21 (MAVPKRKMSRSNTRARRSQWK).

Belongs to the bacterial ribosomal protein bL32 family.

In Arthrobacter sp. (strain FB24), this protein is Large ribosomal subunit protein bL32.